The chain runs to 270 residues: ATP synthase subunit a (270 aa).

5 consecutive transmembrane segments (helical) span residues 37–57 (NVHI…LWVF), 98–118 (VAPL…MDLI), 143–163 (DVNI…YYSI), 217–237 (VVFI…GALP), and 239–259 (AIFH…LTIV).

The protein belongs to the ATPase A chain family. In terms of assembly, F-type ATPases have 2 components, CF(1) - the catalytic core - and CF(0) - the membrane proton channel. CF(1) has five subunits: alpha(3), beta(3), gamma(1), delta(1), epsilon(1). CF(0) has three main subunits: a(1), b(2) and c(9-12). The alpha and beta chains form an alternating ring which encloses part of the gamma chain. CF(1) is attached to CF(0) by a central stalk formed by the gamma and epsilon chains, while a peripheral stalk is formed by the delta and b chains.

It localises to the cell inner membrane. Functionally, key component of the proton channel; it plays a direct role in the translocation of protons across the membrane. The polypeptide is ATP synthase subunit a (Aliivibrio salmonicida (strain LFI1238) (Vibrio salmonicida (strain LFI1238))).